Here is a 323-residue protein sequence, read N- to C-terminus: CIMIP2 protein CG18335 (323 aa).

It belongs to the CIMIP2 family.

It localises to the cytoplasm. The protein localises to the cytoskeleton. It is found in the cilium axoneme. Its function is as follows. Probable microtubule inner protein (MIP) part of the dynein-decorated doublet microtubules (DMTs) in cilium axoneme. This is CIMIP2 protein CG18335 from Drosophila melanogaster (Fruit fly).